Reading from the N-terminus, the 101-residue chain is Integration host factor subunit beta (101 aa).

This sequence belongs to the bacterial histone-like protein family. Heterodimer of an alpha and a beta chain.

Functionally, this protein is one of the two subunits of integration host factor, a specific DNA-binding protein that functions in genetic recombination as well as in transcriptional and translational control. The polypeptide is Integration host factor subunit beta (Maricaulis maris (strain MCS10) (Caulobacter maris)).